A 64-amino-acid chain; its full sequence is Large ribosomal subunit protein uL30 (64 aa).

Belongs to the universal ribosomal protein uL30 family. In terms of assembly, part of the 50S ribosomal subunit.

In Rhodopseudomonas palustris (strain BisA53), this protein is Large ribosomal subunit protein uL30.